We begin with the raw amino-acid sequence, 238 residues long: Pyridoxine 5'-phosphate synthase (238 aa).

Asn6 is a binding site for 3-amino-2-oxopropyl phosphate. 1-deoxy-D-xylulose 5-phosphate is bound at residue 8–9; the sequence is DH. Arg17 serves as a coordination point for 3-amino-2-oxopropyl phosphate. Catalysis depends on His42, which acts as the Proton acceptor. 1-deoxy-D-xylulose 5-phosphate contacts are provided by Arg44 and His49. Glu69 functions as the Proton acceptor in the catalytic mechanism. Thr99 lines the 1-deoxy-D-xylulose 5-phosphate pocket. His186 serves as the catalytic Proton donor. 3-amino-2-oxopropyl phosphate contacts are provided by residues Gly187 and 208–209; that span reads GH.

The protein belongs to the PNP synthase family. As to quaternary structure, homooctamer; tetramer of dimers.

It localises to the cytoplasm. The catalysed reaction is 3-amino-2-oxopropyl phosphate + 1-deoxy-D-xylulose 5-phosphate = pyridoxine 5'-phosphate + phosphate + 2 H2O + H(+). The protein operates within cofactor biosynthesis; pyridoxine 5'-phosphate biosynthesis; pyridoxine 5'-phosphate from D-erythrose 4-phosphate: step 5/5. In terms of biological role, catalyzes the complicated ring closure reaction between the two acyclic compounds 1-deoxy-D-xylulose-5-phosphate (DXP) and 3-amino-2-oxopropyl phosphate (1-amino-acetone-3-phosphate or AAP) to form pyridoxine 5'-phosphate (PNP) and inorganic phosphate. The protein is Pyridoxine 5'-phosphate synthase of Anaplasma marginale (strain St. Maries).